Reading from the N-terminus, the 160-residue chain is Sperm protein associated with the nucleus on the X chromosome N2 (160 aa).

2 disordered regions span residues 1-48 (MEKP…TSEY) and 64-160 (SNQL…GEED). Residues 10–35 (GEKRKSPCDSNNRNDEMQETPNRDLA) show a composition bias toward basic and acidic residues. Over residues 64–79 (SNQLENDQSQENSVNP) the composition is skewed to polar residues. Positions 81-97 (QEEEDEGSSQEDEDLDS) are enriched in acidic residues. Residues 136-148 (SSERSSQEEKDPD) show a composition bias toward basic and acidic residues.

It belongs to the SPAN-X family.

The protein is Sperm protein associated with the nucleus on the X chromosome N2 (SPANXN2) of Pongo pygmaeus (Bornean orangutan).